A 300-amino-acid chain; its full sequence is GTPase Era (300 aa).

An Era-type G domain is found at 8 to 176 (RCGYVAIVGR…EALIAKHLPE (169 aa)). Residues 16-23 (GRPNVGKS) are G1. A GTP-binding site is contributed by 16 to 23 (GRPNVGKS). Residues 42–46 (QTTRH) form a G2 region. The tract at residues 63–66 (DTPG) is G3. Residues 63–67 (DTPGM) and 125–128 (NKTD) contribute to the GTP site. The tract at residues 125–128 (NKTD) is G4. Residues 155-157 (ISA) form a G5 region. The 85-residue stretch at 199–283 (VREKIMRQLG…MLNLWVKVKG (85 aa)) folds into the KH type-2 domain.

Belongs to the TRAFAC class TrmE-Era-EngA-EngB-Septin-like GTPase superfamily. Era GTPase family. Monomer.

It localises to the cytoplasm. Its subcellular location is the cell inner membrane. Its function is as follows. An essential GTPase that binds both GDP and GTP, with rapid nucleotide exchange. Plays a role in 16S rRNA processing and 30S ribosomal subunit biogenesis and possibly also in cell cycle regulation and energy metabolism. The polypeptide is GTPase Era (Pseudomonas putida (strain W619)).